Consider the following 138-residue polypeptide: Protein transport protein got1 homolog (138 aa).

The Cytoplasmic segment spans residues 1-7 (MFTDQQK). A helical membrane pass occupies residues 8–28 (IGAMLSAMGLFFGFLGVLLFL). Topologically, residues 29–30 (DR) are lumenal. Residues 31 to 51 (NLLALGNLLLVSGIVLILGLQ) traverse the membrane as a helical segment. Topologically, residues 52–62 (KTTKFFAQKKK) are cytoplasmic. A helical transmembrane segment spans residues 63–82 (IKGTILFFFGIVVLLVTRWT). Residues 83-87 (FVGMV) are Lumenal-facing. Residues 88–108 (IEIFGFVNLFGDAFPIVISIL) form a helical membrane-spanning segment. Topologically, residues 109 to 138 (RKLPIIGNILNHPLVNRLLQKADSGNELPF) are cytoplasmic.

It belongs to the GOT1 family.

The protein resides in the golgi apparatus membrane. In terms of biological role, may be involved in fusion of ER-derived transport vesicles with the Golgi complex. This Dictyostelium discoideum (Social amoeba) protein is Protein transport protein got1 homolog (golt1).